We begin with the raw amino-acid sequence, 344 residues long: DNA-directed RNA polymerase subunit alpha (344 aa).

The interval 1 to 238 is alpha N-terminal domain (alpha-NTD); that stretch reads MKVIKTAPLI…KQLGVFGERP (238 aa). Positions 254–344 are alpha C-terminal domain (alpha-CTD); that stretch reads AKDLSAKIES…EKLEDKGGND (91 aa).

This sequence belongs to the RNA polymerase alpha chain family. As to quaternary structure, homodimer. The RNAP catalytic core consists of 2 alpha, 1 beta, 1 beta' and 1 omega subunit. When a sigma factor is associated with the core the holoenzyme is formed, which can initiate transcription.

It catalyses the reaction RNA(n) + a ribonucleoside 5'-triphosphate = RNA(n+1) + diphosphate. DNA-dependent RNA polymerase catalyzes the transcription of DNA into RNA using the four ribonucleoside triphosphates as substrates. The polypeptide is DNA-directed RNA polymerase subunit alpha (Helicobacter pylori (strain J99 / ATCC 700824) (Campylobacter pylori J99)).